Here is a 73-residue protein sequence, read N- to C-terminus: Translation initiation factor IF-1 3 (73 aa).

One can recognise an S1-like domain in the interval 1 to 72 (MAKEELVEFG…TKGRINYRHK (72 aa)).

It belongs to the IF-1 family. Component of the 30S ribosomal translation pre-initiation complex which assembles on the 30S ribosome in the order IF-2 and IF-3, IF-1 and N-formylmethionyl-tRNA(fMet); mRNA recruitment can occur at any time during PIC assembly.

Its subcellular location is the cytoplasm. Functionally, one of the essential components for the initiation of protein synthesis. Stabilizes the binding of IF-2 and IF-3 on the 30S subunit to which N-formylmethionyl-tRNA(fMet) subsequently binds. Helps modulate mRNA selection, yielding the 30S pre-initiation complex (PIC). Upon addition of the 50S ribosomal subunit IF-1, IF-2 and IF-3 are released leaving the mature 70S translation initiation complex. In Cupriavidus pinatubonensis (strain JMP 134 / LMG 1197) (Cupriavidus necator (strain JMP 134)), this protein is Translation initiation factor IF-1 3.